A 161-amino-acid chain; its full sequence is Cyclic pyranopterin monophosphate synthase (161 aa).

Substrate contacts are provided by residues Leu73 to His75 and Met110 to Glu111. The active site involves Asp125.

This sequence belongs to the MoaC family. As to quaternary structure, homohexamer; trimer of dimers.

It carries out the reaction (8S)-3',8-cyclo-7,8-dihydroguanosine 5'-triphosphate = cyclic pyranopterin phosphate + diphosphate. It participates in cofactor biosynthesis; molybdopterin biosynthesis. Functionally, catalyzes the conversion of (8S)-3',8-cyclo-7,8-dihydroguanosine 5'-triphosphate to cyclic pyranopterin monophosphate (cPMP). The polypeptide is Cyclic pyranopterin monophosphate synthase (Pseudomonas savastanoi pv. phaseolicola (strain 1448A / Race 6) (Pseudomonas syringae pv. phaseolicola (strain 1448A / Race 6))).